The primary structure comprises 206 residues: Ribosomal RNA small subunit methyltransferase G (206 aa).

S-adenosyl-L-methionine-binding positions include G74, L79, 125 to 126 (VE), and R140.

It belongs to the methyltransferase superfamily. RNA methyltransferase RsmG family.

It is found in the cytoplasm. The catalysed reaction is guanosine(527) in 16S rRNA + S-adenosyl-L-methionine = N(7)-methylguanosine(527) in 16S rRNA + S-adenosyl-L-homocysteine. Its function is as follows. Specifically methylates the N7 position of guanine in position 527 of 16S rRNA. The protein is Ribosomal RNA small subunit methyltransferase G of Shewanella sp. (strain MR-4).